The chain runs to 360 residues: MKPSIVAKLEALHERHEEVQALLGDAGIIADQDRFRALSREYAQLSDVSRCFTDWQQVQDDIETAQMMLDDPEMREMAQEELREAKEKSEQLEQQLQVLLLPKDPDDERNAFLEVRAGTGGDEAALFAGDLFRMYSRYAEARRWRVEIMSMSEGEHGGYKEIIAKISGEGVYGRLKFESGGHRVQRVPATESQGRIHTSACTVAVMPELPEAELPDINPADLRIDTFRSSGAGGQHVNTTDSAIRITHLPTGIVVECQDERSQHKNKAKALSVLGARIHAAETAKRQQAEASTRRNLLGSGDRSDRNRTYNFPQGRVTDHRINLTLYRLDETMEGKLDMLIEPIVQEHQADLLAALSEQE.

N5-methylglutamine is present on Gln-235. The segment at 284 to 313 (AKRQQAEASTRRNLLGSGDRSDRNRTYNFP) is disordered.

It belongs to the prokaryotic/mitochondrial release factor family. Methylated by PrmC. Methylation increases the termination efficiency of RF1.

The protein localises to the cytoplasm. Its function is as follows. Peptide chain release factor 1 directs the termination of translation in response to the peptide chain termination codons UAG and UAA. This chain is Peptide chain release factor 1, found in Salmonella arizonae (strain ATCC BAA-731 / CDC346-86 / RSK2980).